Reading from the N-terminus, the 347-residue chain is GMP reductase (347 aa).

108-131 (ADFDKMKQILALSPSLKFICIDVA) is a binding site for NADP(+). K(+) contacts are provided by Gly-181 and Gly-183. Cys-186 acts as the Thioimidate intermediate in catalysis. 216-239 (IVSDGGCSVPGDVAKAFGGGADFV) contributes to the NADP(+) binding site.

It belongs to the IMPDH/GMPR family. GuaC type 1 subfamily. As to quaternary structure, homotetramer.

The catalysed reaction is IMP + NH4(+) + NADP(+) = GMP + NADPH + 2 H(+). Catalyzes the irreversible NADPH-dependent deamination of GMP to IMP. It functions in the conversion of nucleobase, nucleoside and nucleotide derivatives of G to A nucleotides, and in maintaining the intracellular balance of A and G nucleotides. This is GMP reductase from Yersinia pestis bv. Antiqua (strain Antiqua).